Reading from the N-terminus, the 766-residue chain is Subtilisin-like protease SBT3.13 (766 aa).

The first 21 residues, 1 to 21, serve as a signal peptide directing secretion; that stretch reads MNNSLQSSKLVLLLAIALVLF. Positions 22-120 are cleaved as a propeptide — activation peptide; sequence LNTELDFLTA…VIPNRIRKLK (99 aa). Positions 41–119 constitute an Inhibitor I9 domain; that stretch reads VYIVYLGERE…HVIPNRIRKL (79 aa). The 485-residue stretch at 134 to 618 folds into the Peptidase S8 domain; sequence PTSFSSLSSV…GGLVNPEKAA (485 aa). Catalysis depends on Asp-162, which acts as the Charge relay system. Asn-195 and Asn-223 each carry an N-linked (GlcNAc...) asparagine glycan. The active-site Charge relay system is the His-239. N-linked (GlcNAc...) asparagine glycans are attached at residues Asn-254 and Asn-389. Ser-549 acts as the Charge relay system in catalysis. Asn-641 carries an N-linked (GlcNAc...) asparagine glycan.

This sequence belongs to the peptidase S8 family.

Its subcellular location is the secreted. The sequence is that of Subtilisin-like protease SBT3.13 from Arabidopsis thaliana (Mouse-ear cress).